Consider the following 366-residue polypeptide: Ribosomal RNA large subunit methyltransferase M (366 aa).

S-adenosyl-L-methionine contacts are provided by residues S188, 221–224, D240, D260, and D277; that span reads CPGG. K306 functions as the Proton acceptor in the catalytic mechanism.

Belongs to the class I-like SAM-binding methyltransferase superfamily. RNA methyltransferase RlmE family. RlmM subfamily. Monomer.

Its subcellular location is the cytoplasm. It carries out the reaction cytidine(2498) in 23S rRNA + S-adenosyl-L-methionine = 2'-O-methylcytidine(2498) in 23S rRNA + S-adenosyl-L-homocysteine + H(+). Catalyzes the 2'-O-methylation at nucleotide C2498 in 23S rRNA. The sequence is that of Ribosomal RNA large subunit methyltransferase M from Salmonella heidelberg (strain SL476).